A 331-amino-acid chain; its full sequence is MRNDDMAVVVNGVRKTYGKGKIVALDDVSFKVRRGEVIGLLGPNGAGKTTMVDILSTLTRPDAGSAIIAGYDVVSEPAGVRRSIMVTGQQVAVDDALSGEQNLVLFGRLWGLSKSAARKRAAELLEQFSLVHAGKRRVGTYSGGMRRRIDIACGLVVQPQVAFLDEPTTGLDPRSRQAIWDLVASFKKLGIATLLTTQYLEEADALSDRIILIDHGIIIAEGTANELKHRAGDTFCEIVPRDLKDLDAIVAALGSLLPEHHRAMLTPDSDRITMPAPDGIRMLVEAARRIDEARIELADIALRRPSLDHVFLAMTTDPTESLTHLVSGSAR.

Positions 8-240 (VVVNGVRKTY…AGDTFCEIVP (233 aa)) constitute an ABC transporter domain. 42–49 (GPNGAGKT) is an ATP binding site.

It belongs to the ABC transporter superfamily. Drug exporter-1 (DrugE1) (TC 3.A.1.105) family. In terms of assembly, the complex is composed of two ATP-binding proteins (DrrA) and two transmembrane proteins (DrrB and DrrC).

The protein resides in the cell membrane. Its function is as follows. Part of the ABC transporter complex DrrABC involved in doxorubicin resistance. Responsible for energy coupling to the transport system. Binds ATP. In Mycobacterium tuberculosis (strain CDC 1551 / Oshkosh), this protein is Doxorubicin resistance ATP-binding protein DrrA (drrA).